We begin with the raw amino-acid sequence, 187 residues long: MKLVLGISGASGIPLALRFLEKLPKEIEIFVVASKNAHVVALEESNINLKNAMKDLRPSATFFNEQDIHASIASGSYGIHKMAIIPASMDMVAKIAHGFGGDLISRSASVMLKEKRPLLIAPREMPLSAIMLENLLKLAHSNAIIAPPMMTYYTQSKTLEAMQDFLVGKWFDSLGIENDLYPRWGMN.

Residues 9-11, serine 34, and arginine 123 each bind FMN; that span reads GAS. Dimethylallyl phosphate contacts are provided by tyrosine 153 and lysine 169.

It belongs to the UbiX/PAD1 family.

It carries out the reaction dimethylallyl phosphate + FMNH2 = prenylated FMNH2 + phosphate. Flavin prenyltransferase that catalyzes the synthesis of the prenylated FMN cofactor (prenyl-FMN) for 4-hydroxy-3-polyprenylbenzoic acid decarboxylase UbiD. The prenyltransferase is metal-independent and links a dimethylallyl moiety from dimethylallyl monophosphate (DMAP) to the flavin N5 and C6 atoms of FMN. In Helicobacter pylori (strain J99 / ATCC 700824) (Campylobacter pylori J99), this protein is Flavin prenyltransferase UbiX.